The sequence spans 257 residues: UPF0246 protein CPS_4102 (257 aa).

Belongs to the UPF0246 family.

The chain is UPF0246 protein CPS_4102 from Colwellia psychrerythraea (strain 34H / ATCC BAA-681) (Vibrio psychroerythus).